The sequence spans 413 residues: Enolase (413 aa).

Residue Q170 participates in (2R)-2-phosphoglycerate binding. E212 acts as the Proton donor in catalysis. Residues D245, E286, and D313 each coordinate Mg(2+). Residues K338, R367, S368, and K389 each contribute to the (2R)-2-phosphoglycerate site. K338 serves as the catalytic Proton acceptor.

Belongs to the enolase family. Mg(2+) is required as a cofactor.

The protein localises to the cytoplasm. It is found in the secreted. Its subcellular location is the cell surface. It catalyses the reaction (2R)-2-phosphoglycerate = phosphoenolpyruvate + H2O. The protein operates within carbohydrate degradation; glycolysis; pyruvate from D-glyceraldehyde 3-phosphate: step 4/5. Functionally, catalyzes the reversible conversion of 2-phosphoglycerate (2-PG) into phosphoenolpyruvate (PEP). It is essential for the degradation of carbohydrates via glycolysis. The chain is Enolase from Neorickettsia sennetsu (strain ATCC VR-367 / Miyayama) (Ehrlichia sennetsu).